The following is a 75-amino-acid chain: UPF0270 protein PFLU_4323 (75 aa).

The protein belongs to the UPF0270 family.

The protein is UPF0270 protein PFLU_4323 of Pseudomonas fluorescens (strain SBW25).